We begin with the raw amino-acid sequence, 399 residues long: Accessory Sec system protein translocase subunit SecY2 (399 aa).

10 consecutive transmembrane segments (helical) span residues 14-34 (IFFT…SIVS), 60-80 (LNIF…LTLI), 102-122 (ALTL…YINK), 128-148 (SNML…VWLA), 152-172 (TTYG…KSIF), 183-203 (ASLI…LFFI), 237-257 (ISIM…NFIG), 272-292 (FTNP…GYFL), 335-355 (WFGS…ALLV), and 362-382 (VYFT…AETI).

The protein belongs to the SecY/SEC61-alpha family. SecY2 subfamily. As to quaternary structure, component of the accessory SecA2/SecY2 protein translocase complex required to export cell wall proteins. May form heterotrimers with SecE and SecG subunits.

It is found in the cell membrane. In terms of biological role, part of the accessory SecA2/SecY2 system specifically required for export of possible cell wall proteins. The central subunit of a protein translocation channel. This chain is Accessory Sec system protein translocase subunit SecY2, found in Staphylococcus epidermidis (strain ATCC 12228 / FDA PCI 1200).